Reading from the N-terminus, the 257-residue chain is Small ribosomal subunit protein uS2 (257 aa).

Belongs to the universal ribosomal protein uS2 family.

The protein is Small ribosomal subunit protein uS2 of Ruegeria pomeroyi (strain ATCC 700808 / DSM 15171 / DSS-3) (Silicibacter pomeroyi).